A 754-amino-acid chain; its full sequence is Polyribonucleotide nucleotidyltransferase (754 aa).

Residues aspartate 525 and aspartate 531 each coordinate Mg(2+). The KH domain maps to 591–650 (PRITTIKVPVDKIGEVIGPKGKMINSITEETGASISIEDDGTVFVGASNGEAAQAAIDKI). Residues 662 to 731 (GERFLGTVVK…NRGKISLVLV (70 aa)) form the S1 motif domain.

It belongs to the polyribonucleotide nucleotidyltransferase family. It depends on Mg(2+) as a cofactor.

The protein resides in the cytoplasm. The enzyme catalyses RNA(n+1) + phosphate = RNA(n) + a ribonucleoside 5'-diphosphate. Its function is as follows. Involved in mRNA degradation. Catalyzes the phosphorolysis of single-stranded polyribonucleotides processively in the 3'- to 5'-direction. This Mycolicibacterium vanbaalenii (strain DSM 7251 / JCM 13017 / BCRC 16820 / KCTC 9966 / NRRL B-24157 / PYR-1) (Mycobacterium vanbaalenii) protein is Polyribonucleotide nucleotidyltransferase.